A 490-amino-acid chain; its full sequence is Protein U94 (490 aa).

A PV NS1-Nuc domain is found at 1-210 (MFSIINPSDD…SHFNKKPNVK (210 aa)).

It is found in the host nucleus. This Human herpesvirus 6A (strain Uganda-1102) (HHV-6 variant A) protein is Protein U94 (U94).